The sequence spans 140 residues: Ribosome maturation factor RimP (140 aa).

It belongs to the RimP family.

It localises to the cytoplasm. In terms of biological role, required for maturation of 30S ribosomal subunits. The chain is Ribosome maturation factor RimP from Campylobacter hominis (strain ATCC BAA-381 / DSM 21671 / CCUG 45161 / LMG 19568 / NCTC 13146 / CH001A).